Here is a 102-residue protein sequence, read N- to C-terminus: Acid shock protein (102 aa).

An N-terminal signal peptide occupies residues 1–21; it reads MKKVLALVVAAAMGLSSAAFA. Residues 22 to 41 show a composition bias toward low complexity; sequence AETATTPAPTATTTKAAPAK. Positions 22-58 are excised as a propeptide; the sequence is AETATTPAPTATTTKAAPAKTTHHKKQHKAAPAQKAQ. The disordered stretch occupies residues 22 to 102; that stretch reads AETATTPAPT…PAKPAAQPAA (81 aa). Positions 80-90 are enriched in basic residues; sequence AAKKHAGKHSH. Residues 91–102 are compositionally biased toward low complexity; that stretch reads QQPAKPAAQPAA.

It belongs to the Asr family. Post-translationally, proteolytic processing gives rise to the active protein.

The protein resides in the periplasm. Its function is as follows. Required for growth and/or survival at acidic conditions. The chain is Acid shock protein from Escherichia coli (strain 55989 / EAEC).